The primary structure comprises 397 residues: Vacuolar protein sorting-associated protein 37A (397 aa).

The interval 1–22 (MSWLFPLTKSASSSAAGSPGGL) is disordered. Position 18 is a phosphoserine (Ser-18). One can recognise a VPS37 C-terminal domain in the interval 308 to 397 (KSTFEKKMQR…AMHSQFHAPL (90 aa)).

Belongs to the VPS37 family. In terms of assembly, component of the ESCRT-I complex (endosomal sorting complex required for transport I) which consists of TSG101, VPS28, a VPS37 protein (VPS37A to -D) and MVB12A or MVB12B in a 1:1:1:1 stoichiometry. Interacts with TSG101, VPS28 and HGS. Component of an ESCRT-I complex (endosomal sorting complex required for transport I) which consists of TSG101, VPS28, VPS37A and UBAP1 in a 1:1:1:1 stoichiometry. In terms of tissue distribution, widely expressed. Examined tissues include heart, brain, placenta, liver, skeletal muscle, kidney and pancreas. More abundant in liver. Strongly decreased or undetected in hepatomas.

It localises to the late endosome membrane. Its subcellular location is the nucleus. Its function is as follows. Component of the ESCRT-I complex, a regulator of vesicular trafficking process. Required for the sorting of endocytic ubiquitinated cargos into multivesicular bodies. May be involved in cell growth and differentiation. The polypeptide is Vacuolar protein sorting-associated protein 37A (VPS37A) (Homo sapiens (Human)).